Here is a 378-residue protein sequence, read N- to C-terminus: 1-acyl-sn-glycerol-3-phosphate acyltransferase delta (378 aa).

Residues 11 to 31 (FLCHLVFCYVFIASGLIINTI) form a helical membrane-spanning segment. The short motif at 96–101 (HKFEID) is the HXXXXD motif element. 3 helical membrane passes run 125–145 (ELAYVPIIGWMWYFTEMVFCS), 307–327 (TLVNWLFWASLVLYPFFQFLV), and 338–358 (LASFILVFFVASVGVRWMIGV).

It belongs to the 1-acyl-sn-glycerol-3-phosphate acyltransferase family.

It is found in the endoplasmic reticulum membrane. The catalysed reaction is a 1-acyl-sn-glycero-3-phosphate + an acyl-CoA = a 1,2-diacyl-sn-glycero-3-phosphate + CoA. It catalyses the reaction (4Z,7Z,10Z,13Z,16Z,19Z)-docosahexaenoyl-CoA + 1-hexadecanoyl-sn-glycero-3-phosphate = 1-hexadecanoyl-2-(4Z,7Z,10Z,13Z,16Z,19Z-docosahexaenoyl)-sn-glycero-3-phosphate + CoA. The enzyme catalyses 1-octadecanoyl-sn-glycero-3-phosphate + (9Z,12Z)-octadecadienoyl-CoA = 1-octadecanoyl-2-(9Z,12Z-octadecadienoyl)-sn-glycero-3-phosphate + CoA. It carries out the reaction 1-octadecanoyl-sn-glycero-3-phosphate + (4Z,7Z,10Z,13Z,16Z,19Z)-docosahexaenoyl-CoA = 1-octadecanoyl-2-(4Z,7Z,10Z,13Z,16Z,19Z-docosahexaenoyl)-sn-glycero-3-phosphate + CoA. The catalysed reaction is (4Z,7Z,10Z,13Z,16Z,19Z)-docosahexaenoyl-CoA + 1-(9Z-octadecenoyl)-sn-glycero-3-phosphate = 1-(9Z-octadecenoyl)-2-(4Z,7Z,10Z,13Z,16Z,19Z-docosahexaenoyl)-sn-glycero-3-phosphate + CoA. Its pathway is phospholipid metabolism; CDP-diacylglycerol biosynthesis; CDP-diacylglycerol from sn-glycerol 3-phosphate: step 2/3. Functionally, converts 1-acyl-sn-glycerol-3-phosphate (lysophosphatidic acid or LPA) into 1,2-diacyl-sn-glycerol-3-phosphate (phosphatidic acid or PA) by incorporating an acyl moiety at the sn-2 position of the glycerol backbone. Exhibits high acyl-CoA specificity for polyunsaturated fatty acyl-CoA, especially docosahexaenoyl-CoA (22:6-CoA, DHA-CoA). The sequence is that of 1-acyl-sn-glycerol-3-phosphate acyltransferase delta (AGPAT4) from Pongo abelii (Sumatran orangutan).